The primary structure comprises 95 residues: Small ribosomal subunit protein bS6 (95 aa).

It belongs to the bacterial ribosomal protein bS6 family.

Functionally, binds together with bS18 to 16S ribosomal RNA. The sequence is that of Small ribosomal subunit protein bS6 from Geobacillus kaustophilus (strain HTA426).